A 328-amino-acid chain; its full sequence is MLGFIIRPPHQLLSLLSCPGLRIPRFSVLCAPPRLRTMAASSSFSELPLVAVCQVTSTPDKEQNFKTCAELIREAARLGACLAFLPEAFDFIARDPEETRRLSEPLSGNLLEEYTQLARECGLWLSLGGFHERGQDWEQTQKIYNCHVIMNNMGSVVATYRKTHLCDVEIPGQGPMRESNSTIPGPSLESPISTPAGKIGLAICYDMRFPELSLALVQAGAEILTYPSAFGSVTGPAHWEVLLRARAIETQCYVVAAAQCGRHHEKRASYGHSMVVDPWGTVVARCSEGPGLCLARIDLNYLQQLRKQLPVFQHRRPDLYGNLGHPLS.

The transit peptide at 1–37 (MLGFIIRPPHQLLSLLSCPGLRIPRFSVLCAPPRLRT) directs the protein to the mitochondrion. The CN hydrolase domain maps to 47–299 (LPLVAVCQVT…PGLCLARIDL (253 aa)). The active-site Proton acceptor is Glu87. Lys162 acts as the Proton donor in catalysis. Cys204 functions as the Nucleophile in the catalytic mechanism.

It belongs to the carbon-nitrogen hydrolase superfamily. NIT1/NIT2 family.

The protein localises to the cytoplasm. Its subcellular location is the mitochondrion. The catalysed reaction is N-(4-oxoglutaryl)-L-cysteinylglycine + H2O = L-cysteinylglycine + 2-oxoglutarate. Its function is as follows. Catalyzes the hydrolysis of the amide bond in N-(4-oxoglutarate)-L-cysteinylglycine (deaminated glutathione), a metabolite repair reaction to dispose of the harmful deaminated glutathione. Plays a role in cell growth and apoptosis. Has tumor suppressor properties that enhances the apoptotic responsiveness in cancer cells. It is also a negative regulator of primary T-cells. The sequence is that of Deaminated glutathione amidase (NIT1) from Bos taurus (Bovine).